The following is a 283-amino-acid chain: Mitochondrial outer membrane protein porin (283 aa).

It belongs to the eukaryotic mitochondrial porin family.

Its subcellular location is the mitochondrion outer membrane. Its function is as follows. Forms a channel through the cell membrane that allows diffusion of small hydrophilic molecules. The channel adopts an open conformation at low or zero membrane potential and a closed conformation at potentials above 30-40 mV. The open state has a weak anion selectivity whereas the closed state is cation-selective. The polypeptide is Mitochondrial outer membrane protein porin (Neurospora crassa (strain ATCC 24698 / 74-OR23-1A / CBS 708.71 / DSM 1257 / FGSC 987)).